A 233-amino-acid polypeptide reads, in one-letter code: Large ribosomal subunit protein uL1 (233 aa).

This sequence belongs to the universal ribosomal protein uL1 family. In terms of assembly, part of the 50S ribosomal subunit.

Functionally, binds directly to 23S rRNA. The L1 stalk is quite mobile in the ribosome, and is involved in E site tRNA release. Its function is as follows. Protein L1 is also a translational repressor protein, it controls the translation of the L11 operon by binding to its mRNA. This Shewanella woodyi (strain ATCC 51908 / MS32) protein is Large ribosomal subunit protein uL1.